Consider the following 114-residue polypeptide: Large ribosomal subunit protein bL19 (114 aa).

Belongs to the bacterial ribosomal protein bL19 family.

Functionally, this protein is located at the 30S-50S ribosomal subunit interface and may play a role in the structure and function of the aminoacyl-tRNA binding site. This chain is Large ribosomal subunit protein bL19, found in Thermoanaerobacter sp. (strain X514).